We begin with the raw amino-acid sequence, 336 residues long: Acyl-CoA-binding domain-containing protein 4 (336 aa).

The helical; Signal-anchor transmembrane segment at 12 to 32 (AVIGLLFAFLVAKLISTVIAF) threads the bilayer. The interval 40 to 88 (TRSTPTSPSAADTPAAPAPPPASLDGGHGDTSDGSGSDSDSDWEGVEST) is disordered. A compositionally biased stretch (low complexity) spans 42-54 (STPTSPSAADTPA). Residues 78–88 (SDSDWEGVEST) show a composition bias toward acidic residues. The region spanning 90–178 (LDEEFSAASA…VDELFPNWSM (89 aa)) is the ACB domain. Residues 120-124 (YGLYK), Lys-142, Lys-146, and Tyr-165 each bind an acyl-CoA. Asn-175 carries an N-linked (GlcNAc...) asparagine glycan. Positions 179 to 202 (GSSTKRKDEDTTVSASSSKGPMGP) are disordered. An N-linked (GlcNAc...) asparagine glycan is attached at Asn-216. ANK repeat units lie at residues 251-280 (EGRT…DVNA) and 284-313 (EGQT…DVQI).

This sequence belongs to the ACBP family. In terms of tissue distribution, highly expressed in leaves. Expressed at low levels in roots and seeds.

It localises to the endoplasmic reticulum membrane. Functionally, binds medium- and long-chain acyl-CoA esters with high affinity. Can interact in vitro with palmitoyl-CoA, linoleoyl-CoA and linolenoyl-CoA. Binds phosphatidic acid (PA) and phosphatidylcholine (PC) in vitro. May play a role in the biosynthesis of phospholipids. The protein is Acyl-CoA-binding domain-containing protein 4 of Oryza sativa subsp. japonica (Rice).